Reading from the N-terminus, the 604-residue chain is Glutamyl-tRNA(Gln) amidotransferase subunit B, mitochondrial (604 aa).

The transit peptide at 1-48 (MIRQCLSRRGAYSRYRLAARGVELAEPFHHQSSRPQGRRNWSSSPRCS) directs the protein to the mitochondrion. The segment at 28–57 (FHHQSSRPQGRRNWSSSPRCSLDIRTDTPR) is disordered. Over residues 33-46 (SRPQGRRNWSSSPR) the composition is skewed to polar residues.

Belongs to the GatB/GatE family. GatB subfamily. Subunit of the heterotrimeric GatCAB amidotransferase (AdT) complex, composed of A, B and C subunits.

Its subcellular location is the mitochondrion. It catalyses the reaction L-glutamyl-tRNA(Gln) + L-glutamine + ATP + H2O = L-glutaminyl-tRNA(Gln) + L-glutamate + ADP + phosphate + H(+). In terms of biological role, allows the formation of correctly charged Gln-tRNA(Gln) through the transamidation of misacylated Glu-tRNA(Gln) in the mitochondria. The reaction takes place in the presence of glutamine and ATP through an activated gamma-phospho-Glu-tRNA(Gln). The sequence is that of Glutamyl-tRNA(Gln) amidotransferase subunit B, mitochondrial from Ajellomyces dermatitidis (strain ER-3 / ATCC MYA-2586) (Blastomyces dermatitidis).